The sequence spans 551 residues: Probable NADH-ubiquinone oxidoreductase C947.15c, mitochondrial (551 aa).

The transit peptide at 1-35 directs the protein to the mitochondrion; the sequence is MSVSKARLQSVVRLSRTVPYSKTMVRSFHVSCAVK. Residue 92-122 participates in FAD binding; it reads NIVVLGSGWGAVAAIKNLDPSLYNITLVSPR. NAD(+) is bound at residue 255 to 291; it reads LHITVVGGGPTGMEFAAEMQDFIDNDVKDMFPELQKD.

It belongs to the NADH dehydrogenase family.

The protein localises to the mitochondrion. The catalysed reaction is a quinone + NADH + H(+) = a quinol + NAD(+). The enzyme catalyses a ubiquinone + NADH + H(+) = a ubiquinol + NAD(+). In terms of biological role, catalyzes the oxidation of NADH. This chain is Probable NADH-ubiquinone oxidoreductase C947.15c, mitochondrial, found in Schizosaccharomyces pombe (strain 972 / ATCC 24843) (Fission yeast).